The sequence spans 518 residues: Chromosomal replication initiator protein DnaA (518 aa).

A domain I, interacts with DnaA modulators region spans residues 1–76 (METDGGDFPS…RALSEAYGSP (76 aa)). The segment at 76-176 (PIRLAVTVDP…RRPTTRIENS (101 aa)) is domain II. The segment at 91–174 (LTPERTGEHS…QPRRPTTRIE (84 aa)) is disordered. Over residues 124 to 135 (DGLHLDERRSGS) the composition is skewed to basic and acidic residues. Residues 136 to 147 (LEEDSPLDDSDP) show a composition bias toward acidic residues. Residues 177-393 (RLNPKYIFET…GALIRVTAFA (217 aa)) form a domain III, AAA+ region region. Residues Gly221, Gly223, Lys224, and Thr225 each contribute to the ATP site. Residues 394-518 (SLNRQPVDMQ…TNRIKKQSGA (125 aa)) form a domain IV, binds dsDNA region.

It belongs to the DnaA family. Oligomerizes as a right-handed, spiral filament on DNA at oriC.

It is found in the cytoplasm. Its function is as follows. Plays an essential role in the initiation and regulation of chromosomal replication. ATP-DnaA binds to the origin of replication (oriC) to initiate formation of the DNA replication initiation complex once per cell cycle. Binds the DnaA box (a 9 base pair repeat at the origin) and separates the double-stranded (ds)DNA. Forms a right-handed helical filament on oriC DNA; dsDNA binds to the exterior of the filament while single-stranded (ss)DNA is stabiized in the filament's interior. The ATP-DnaA-oriC complex binds and stabilizes one strand of the AT-rich DNA unwinding element (DUE), permitting loading of DNA polymerase. After initiation quickly degrades to an ADP-DnaA complex that is not apt for DNA replication. Binds acidic phospholipids. The sequence is that of Chromosomal replication initiator protein DnaA from Kineococcus radiotolerans (strain ATCC BAA-149 / DSM 14245 / SRS30216).